The following is a 429-amino-acid chain: Histidine--tRNA ligase (429 aa).

It belongs to the class-II aminoacyl-tRNA synthetase family. As to quaternary structure, homodimer.

The protein resides in the cytoplasm. The catalysed reaction is tRNA(His) + L-histidine + ATP = L-histidyl-tRNA(His) + AMP + diphosphate + H(+). This Pseudomonas aeruginosa (strain LESB58) protein is Histidine--tRNA ligase.